Consider the following 349-residue polypeptide: Pseudouridylate synthase TRUB1 (349 aa).

Alanine 2 carries the post-translational modification N-acetylalanine. Residue serine 11 is modified to Phosphoserine. The Nucleophile role is filled by aspartate 121.

It belongs to the pseudouridine synthase TruB family. As to expression, highly expressed in heart, skeletal muscle and liver. Expressed at lower levels in lung, small intestine, kidney and spleen.

The protein localises to the nucleus. It is found in the cytoplasm. It localises to the cytosol. The catalysed reaction is a uridine in mRNA = a pseudouridine in mRNA. It catalyses the reaction a uridine in tRNA = a pseudouridine in tRNA. The enzyme catalyses uridine(55) in tRNA = pseudouridine(55) in tRNA. In terms of biological role, pseudouridine synthase that catalyzes pseudouridylation of mRNAs and tRNAs. Mediates pseudouridylation of mRNAs with the consensus sequence 5'-GUUCNANNC-3', harboring a stem-loop structure. Constitutes the major pseudouridine synthase acting on mRNAs. Also catalyzes pseudouridylation of some tRNAs, including synthesis of pseudouridine(55) from uracil-55, in the psi GC loop of a subset of tRNAs. Promotes the processing of pri-let-7 microRNAs (pri-miRNAs) independently of its RNA pseudouridylate synthase activity. Acts by binding to the stem-loop structure on pri-let-7, preventing LIN28-binding (LIN28A and/or LIN28B), thereby enhancing the interaction between pri-let-7 and the microprocessor DGCR8, which mediates miRNA maturation. The chain is Pseudouridylate synthase TRUB1 from Homo sapiens (Human).